Here is a 1036-residue protein sequence, read N- to C-terminus: Beta-galactosidase (1036 aa).

Asparagine 97 and aspartate 197 together coordinate substrate. A Na(+)-binding site is contributed by aspartate 197. Mg(2+) is bound by residues glutamate 411, histidine 413, and glutamate 456. Substrate contacts are provided by residues glutamate 456 and 532 to 535 (EYAH). Glutamate 456 acts as the Proton donor in catalysis. The active-site Nucleophile is the glutamate 532. A Mg(2+)-binding site is contributed by asparagine 592. Na(+) contacts are provided by phenylalanine 596 and aspartate 599. Substrate is bound by residues aspartate 599 and tryptophan 1006.

This sequence belongs to the glycosyl hydrolase 2 family. As to quaternary structure, homotetramer. Mg(2+) is required as a cofactor. Requires Na(+) as cofactor.

It catalyses the reaction Hydrolysis of terminal non-reducing beta-D-galactose residues in beta-D-galactosides.. The protein is Beta-galactosidase of Leuconostoc mesenteroides subsp. mesenteroides (strain ATCC 8293 / DSM 20343 / BCRC 11652 / CCM 1803 / JCM 6124 / NCDO 523 / NBRC 100496 / NCIMB 8023 / NCTC 12954 / NRRL B-1118 / 37Y).